The chain runs to 311 residues: Probable manganese-dependent inorganic pyrophosphatase (311 aa).

Residues His-9, Asp-13, Asp-15, Asp-77, His-99, and Asp-151 each coordinate Mn(2+).

The protein belongs to the PPase class C family. Mn(2+) serves as cofactor.

Its subcellular location is the cytoplasm. The enzyme catalyses diphosphate + H2O = 2 phosphate + H(+). The protein is Probable manganese-dependent inorganic pyrophosphatase of Streptococcus pyogenes serotype M1.